The chain runs to 393 residues: Probable acetyl-CoA acyltransferase (393 aa).

The Acyl-thioester intermediate role is filled by C88. Active-site proton acceptor residues include H349 and C378.

The protein belongs to the thiolase-like superfamily. Thiolase family.

The protein resides in the cytoplasm. The catalysed reaction is 2 acetyl-CoA = acetoacetyl-CoA + CoA. This Staphylococcus aureus (strain MRSA252) protein is Probable acetyl-CoA acyltransferase.